Consider the following 180-residue polypeptide: Hypoxanthine-guanine phosphoribosyltransferase (180 aa).

Residues Lys-40, 99–107 (EDIVDSGLT), Lys-131, and Asp-159 contribute to the GMP site. Asp-103 (proton acceptor) is an active-site residue. Asp-159 contacts Mg(2+).

Belongs to the purine/pyrimidine phosphoribosyltransferase family. It depends on Mg(2+) as a cofactor.

The protein localises to the cytoplasm. It catalyses the reaction IMP + diphosphate = hypoxanthine + 5-phospho-alpha-D-ribose 1-diphosphate. The catalysed reaction is GMP + diphosphate = guanine + 5-phospho-alpha-D-ribose 1-diphosphate. The protein operates within purine metabolism; IMP biosynthesis via salvage pathway; IMP from hypoxanthine: step 1/1. Functionally, converts guanine to guanosine monophosphate, and hypoxanthine to inosine monophosphate. Transfers the 5-phosphoribosyl group from 5-phosphoribosylpyrophosphate onto the purine. Plays a central role in the generation of purine nucleotides through the purine salvage pathway. This Dictyostelium discoideum (Social amoeba) protein is Hypoxanthine-guanine phosphoribosyltransferase (hprT).